The primary structure comprises 551 residues: MTDPIMSNETIIRRSANYRPPIWDFDFVQSLKSEFVGELNIKRIDKLKEDVKMMLNKTMAPSDQFELIDTLQRLGLAYHFGDEIKRIVKSIYNSHRNDNTWMKEDLHTIALQFRLLRQHGYNISQEIFDIFRDELGNFKECLHEDIEGMLSLYEASYLLEEGENILEVAREFAASCLKKYIQVNKDQLLSMIVSHSLEVPLHWRMPRLETRWFIDIYEKKQGMNPLLLELAKLDFNNVQATYHEDLKYVTSWWRNTGLGEKLSFARDRLMENFLWTVGVNFPPQFGYFRRISTKVNSLITVIDDIYDVYGTLDELQLFTNAVERWDVNAMDQLPEYMKLCFLALHNSINEMAYDALREQGFHIIPYLKKAWADLCKSYLVEAKWYYIGYTPTLQEYMDNAWISISAPVILVHAYFLEGSPITNEALKSLKEYPDIIQWSSMILRFADDLGTSSDELKRGDNPKSIQCYIYETGVSELKAREHIQYLIGETWKKINKEREYIDSPFSKIFIEVATNLARMAQCMYQHGDGHGIEDGETKDHVLSLLVKPIPM.

Mg(2+) contacts are provided by Asp-303, Asp-307, and Glu-455. The DDXXD motif signature appears at 303-307; sequence DDIYD.

The protein belongs to the terpene synthase family. Mg(2+) serves as cofactor.

Its function is as follows. Catalyzes the cyclization of farnesyl diphosphate to sesquiterpene olefins. This chain is Terpene synthase 10 (TPS10), found in Ricinus communis (Castor bean).